A 361-amino-acid polypeptide reads, in one-letter code: Trans-2,3-enoyl-CoA reductase-like (361 aa).

Phosphoserine is present on residues S33 and S35. 4 helical membrane passes run 139–159, 181–201, 215–235, and 309–329; these read VGWT…YLLF, VHLA…ETLF, LIKG…YINH, and ISFT…LMTI.

This sequence belongs to the steroid 5-alpha reductase family. As to expression, expression is highest in the heart with very low to almost undetectable levels in brain, skeletal muscle, stomach, pancreas, liver, kidney, small intestine, and uterus.

Its subcellular location is the membrane. The protein localises to the endoplasmic reticulum. The chain is Trans-2,3-enoyl-CoA reductase-like (Tecrl) from Mus musculus (Mouse).